The following is a 113-amino-acid chain: Large ribosomal subunit protein eL31B (113 aa).

This sequence belongs to the eukaryotic ribosomal protein eL31 family. In terms of assembly, component of the large ribosomal subunit (LSU). Mature yeast ribosomes consist of a small (40S) and a large (60S) subunit. The 40S small subunit contains 1 molecule of ribosomal RNA (18S rRNA) and 33 different proteins (encoded by 57 genes). The large 60S subunit contains 3 rRNA molecules (25S, 5.8S and 5S rRNA) and 46 different proteins (encoded by 81 genes).

The protein localises to the cytoplasm. Its function is as follows. Component of the ribosome, a large ribonucleoprotein complex responsible for the synthesis of proteins in the cell. The small ribosomal subunit (SSU) binds messenger RNAs (mRNAs) and translates the encoded message by selecting cognate aminoacyl-transfer RNA (tRNA) molecules. The large subunit (LSU) contains the ribosomal catalytic site termed the peptidyl transferase center (PTC), which catalyzes the formation of peptide bonds, thereby polymerizing the amino acids delivered by tRNAs into a polypeptide chain. The nascent polypeptides leave the ribosome through a tunnel in the LSU and interact with protein factors that function in enzymatic processing, targeting, and the membrane insertion of nascent chains at the exit of the ribosomal tunnel. The protein is Large ribosomal subunit protein eL31B of Saccharomyces cerevisiae (strain ATCC 204508 / S288c) (Baker's yeast).